The following is a 491-amino-acid chain: [Pyruvate dehydrogenase (acetyl-transferring)] kinase 2, mitochondrial (491 aa).

The Histidine kinase domain occupies 153–480 (PTIRTLEDAS…DVVLKLGNLM (328 aa)). Residues 300 to 307 (EILRNTYE), aspartate 341, 359 to 360 (SK), and 383 to 446 (DEVH…GIGL) contribute to the ATP site.

This sequence belongs to the PDK/BCKDK protein kinase family. Interacts with PKP1.

It localises to the mitochondrion matrix. The catalysed reaction is L-seryl-[pyruvate dehydrogenase E1 alpha subunit] + ATP = O-phospho-L-seryl-[pyruvate dehydrogenase E1 alpha subunit] + ADP + H(+). In terms of biological role, inhibits the mitochondrial pyruvate dehydrogenase complex by phosphorylation of the E1 alpha subunit (PDA1), thus contributing to the regulation of glucose metabolism. This is [Pyruvate dehydrogenase (acetyl-transferring)] kinase 2, mitochondrial from Saccharomyces cerevisiae (strain ATCC 204508 / S288c) (Baker's yeast).